Consider the following 87-residue polypeptide: Small ribosomal subunit protein bS20 (87 aa).

The interval 1–21 is disordered; the sequence is MANHKSAEKRARQTIKKTERN.

Belongs to the bacterial ribosomal protein bS20 family.

Binds directly to 16S ribosomal RNA. The chain is Small ribosomal subunit protein bS20 from Campylobacter jejuni subsp. jejuni serotype O:23/36 (strain 81-176).